A 307-amino-acid chain; its full sequence is Homoserine O-acetyltransferase (307 aa).

Residue C142 is the Acyl-thioester intermediate of the active site. Substrate-binding residues include K163 and S192. H235 serves as the catalytic Proton acceptor. E237 is a catalytic residue. R249 contributes to the substrate binding site.

Belongs to the MetA family.

The protein localises to the cytoplasm. It catalyses the reaction L-homoserine + acetyl-CoA = O-acetyl-L-homoserine + CoA. The protein operates within amino-acid biosynthesis; L-methionine biosynthesis via de novo pathway; O-acetyl-L-homoserine from L-homoserine: step 1/1. Its function is as follows. Transfers an acetyl group from acetyl-CoA to L-homoserine, forming acetyl-L-homoserine. This is Homoserine O-acetyltransferase from Rhizobium leguminosarum bv. trifolii (strain WSM2304).